The primary structure comprises 175 residues: ATP synthase subunit delta (175 aa).

Belongs to the ATPase delta chain family. F-type ATPases have 2 components, F(1) - the catalytic core - and F(0) - the membrane proton channel. F(1) has five subunits: alpha(3), beta(3), gamma(1), delta(1), epsilon(1). F(0) has three main subunits: a(1), b(2) and c(10-14). The alpha and beta chains form an alternating ring which encloses part of the gamma chain. F(1) is attached to F(0) by a central stalk formed by the gamma and epsilon chains, while a peripheral stalk is formed by the delta and b chains.

Its subcellular location is the cell membrane. Functionally, f(1)F(0) ATP synthase produces ATP from ADP in the presence of a proton or sodium gradient. F-type ATPases consist of two structural domains, F(1) containing the extramembraneous catalytic core and F(0) containing the membrane proton channel, linked together by a central stalk and a peripheral stalk. During catalysis, ATP synthesis in the catalytic domain of F(1) is coupled via a rotary mechanism of the central stalk subunits to proton translocation. In terms of biological role, this protein is part of the stalk that links CF(0) to CF(1). It either transmits conformational changes from CF(0) to CF(1) or is implicated in proton conduction. The protein is ATP synthase subunit delta of Elusimicrobium minutum (strain Pei191).